Here is a 79-residue protein sequence, read N- to C-terminus: Probable [Fe-S]-dependent transcriptional repressor (79 aa).

Iron-sulfur cluster contacts are provided by cysteine 54, cysteine 59, cysteine 62, and cysteine 68.

Belongs to the FeoC family.

May function as a transcriptional regulator that controls feoABC expression. The protein is Probable [Fe-S]-dependent transcriptional repressor of Photorhabdus laumondii subsp. laumondii (strain DSM 15139 / CIP 105565 / TT01) (Photorhabdus luminescens subsp. laumondii).